Reading from the N-terminus, the 231-residue chain is 5'-methylthioadenosine/S-adenosylhomocysteine nucleosidase (231 aa).

Catalysis depends on E12, which acts as the Proton acceptor. Residues G78, V153, and 174–175 each bind substrate; that span reads ME. The active-site Proton donor is the D198.

It belongs to the PNP/UDP phosphorylase family. MtnN subfamily.

It carries out the reaction S-adenosyl-L-homocysteine + H2O = S-(5-deoxy-D-ribos-5-yl)-L-homocysteine + adenine. The catalysed reaction is S-methyl-5'-thioadenosine + H2O = 5-(methylsulfanyl)-D-ribose + adenine. The enzyme catalyses 5'-deoxyadenosine + H2O = 5-deoxy-D-ribose + adenine. It participates in amino-acid biosynthesis; L-methionine biosynthesis via salvage pathway; S-methyl-5-thio-alpha-D-ribose 1-phosphate from S-methyl-5'-thioadenosine (hydrolase route): step 1/2. In terms of biological role, catalyzes the irreversible cleavage of the glycosidic bond in both 5'-methylthioadenosine (MTA) and S-adenosylhomocysteine (SAH/AdoHcy) to adenine and the corresponding thioribose, 5'-methylthioribose and S-ribosylhomocysteine, respectively. Also cleaves 5'-deoxyadenosine, a toxic by-product of radical S-adenosylmethionine (SAM) enzymes, into 5-deoxyribose and adenine. The polypeptide is 5'-methylthioadenosine/S-adenosylhomocysteine nucleosidase (Aliivibrio fischeri (strain MJ11) (Vibrio fischeri)).